The sequence spans 435 residues: Galactomannan galactosyltransferase 1 (435 aa).

The Cytoplasmic segment spans residues 1-20 (MAKFGSRNKSPKWISNGCCF). Residues 21–41 (LLGAFTALLLLWGLCSFIIPI) form a helical; Signal-anchor for type II membrane protein membrane-spanning segment. Over 42 to 435 (PNTDPKLNSV…SPLPFGYPAA (394 aa)) the chain is Lumenal. N-linked (GlcNAc...) asparagine glycosylation is found at Asn-230 and Asn-328. A coiled-coil region spans residues 321 to 354 (EIVKTYENISERYDEVERKVEGLRRRHAEKVSEK).

Belongs to the glycosyltransferase 34 family.

It localises to the golgi apparatus membrane. In terms of biological role, galactomannan galactosyltransferase (GMGT) involved in galactomannan biosynthesis in seed endosperm. GMGT specificity is an important factor regulating the distribution and amount of alpha-1,6-galactose (Gal) substitution of the beta-1,4-linked mannan backbone. This is Galactomannan galactosyltransferase 1 (GMGT1) from Cyamopsis tetragonoloba (Guar).